The chain runs to 297 residues: 4-hydroxy-tetrahydrodipicolinate synthase (297 aa).

Residue threonine 55 coordinates pyruvate. Tyrosine 144 acts as the Proton donor/acceptor in catalysis. The active-site Schiff-base intermediate with substrate is lysine 172. Isoleucine 213 serves as a coordination point for pyruvate.

It belongs to the DapA family. Homotetramer; dimer of dimers.

It localises to the cytoplasm. The catalysed reaction is L-aspartate 4-semialdehyde + pyruvate = (2S,4S)-4-hydroxy-2,3,4,5-tetrahydrodipicolinate + H2O + H(+). Its pathway is amino-acid biosynthesis; L-lysine biosynthesis via DAP pathway; (S)-tetrahydrodipicolinate from L-aspartate: step 3/4. Its function is as follows. Catalyzes the condensation of (S)-aspartate-beta-semialdehyde [(S)-ASA] and pyruvate to 4-hydroxy-tetrahydrodipicolinate (HTPA). The polypeptide is 4-hydroxy-tetrahydrodipicolinate synthase (Lactococcus lactis subsp. cremoris (strain SK11)).